Reading from the N-terminus, the 89-residue chain is Small ribosomal subunit protein bS18 (89 aa).

Residues 1–15 show a composition bias toward low complexity; it reads MTTANTNETAAAAAA. A disordered region spans residues 1–22; it reads MTTANTNETAAAAAAKNRRNKK.

This sequence belongs to the bacterial ribosomal protein bS18 family. In terms of assembly, part of the 30S ribosomal subunit. Forms a tight heterodimer with protein bS6.

In terms of biological role, binds as a heterodimer with protein bS6 to the central domain of the 16S rRNA, where it helps stabilize the platform of the 30S subunit. This is Small ribosomal subunit protein bS18 from Caldanaerobacter subterraneus subsp. tengcongensis (strain DSM 15242 / JCM 11007 / NBRC 100824 / MB4) (Thermoanaerobacter tengcongensis).